Here is a 188-residue protein sequence, read N- to C-terminus: Putative 3-methyladenine DNA glycosylase (188 aa).

The protein belongs to the DNA glycosylase MPG family.

This is Putative 3-methyladenine DNA glycosylase from Ehrlichia ruminantium (strain Gardel).